Consider the following 141-residue polypeptide: Large ribosomal subunit protein uL11 (141 aa).

It belongs to the universal ribosomal protein uL11 family. As to quaternary structure, part of the ribosomal stalk of the 50S ribosomal subunit. Interacts with L10 and the large rRNA to form the base of the stalk. L10 forms an elongated spine to which L12 dimers bind in a sequential fashion forming a multimeric L10(L12)X complex. One or more lysine residues are methylated.

Forms part of the ribosomal stalk which helps the ribosome interact with GTP-bound translation factors. This is Large ribosomal subunit protein uL11 from Prochlorococcus marinus (strain NATL1A).